The primary structure comprises 478 residues: Early growth response protein 4 (478 aa).

A disordered region spans residues 15–37; that stretch reads SKPTEGCAHTSPELPRLPARDAP. 3 consecutive C2H2-type zinc fingers follow at residues 372–396, 402–424, and 430–452; these read FACPVESCVRTFARSDELNRHLRIH, FQCRICLRNFSRSDHLTTHVRTH, and FACDVCGRRFARSDEKKRHSKVH.

It belongs to the EGR C2H2-type zinc-finger protein family.

It is found in the nucleus. In terms of biological role, transcriptional regulator. Recognizes and binds to the DNA sequence 5'-GCGGGGGCG-3' (GSG). Activates the transcription of target genes whose products are required for mitogenesis and differentiation. The chain is Early growth response protein 4 (Egr4) from Rattus norvegicus (Rat).